The chain runs to 587 residues: Leucine-rich repeat-containing protein 63 (587 aa).

7 LRR repeats span residues 251–274 (QSVIETLVTENGNIESVPKQIPPR), 344–367 (AFQLIYLNLSFNDLHYFPTEILCL), 368–390 (KNLQILKLRNNPIKEIPSEIQQL), 392–413 (FLRIFTIAFNLITVLPIGLFSL), 414–436 (SYLEELDVSYNELTFIPNEIQKL), 437–459 (RSLEKLTVDGNELSFFPHGILKL), and 487–510 (LTQIISLFIVQNKLHKFYDKIPVE).

The sequence is that of Leucine-rich repeat-containing protein 63 (LRRC63) from Homo sapiens (Human).